The chain runs to 110 residues: Parvalbumin alpha (110 aa).

EF-hand domains lie at 39 to 74 and 78 to 110; these read KNAK…FAPE and LSEK…VANS. Positions 52, 54, 56, 58, 60, 63, 91, 93, 95, 97, and 102 each coordinate Ca(2+).

Belongs to the parvalbumin family.

Functionally, in muscle, parvalbumin is thought to be involved in relaxation after contraction. It binds two calcium ions. This chain is Parvalbumin alpha, found in Callorhinchus milii (Ghost shark).